Reading from the N-terminus, the 169-residue chain is uncharacterized protein (169 aa).

A run of 2 helical transmembrane segments spans residues 10 to 30 (NVHM…FKLI) and 149 to 169 (IPLA…LLIP).

Its subcellular location is the membrane. This is an uncharacterized protein from Dictyostelium discoideum (Social amoeba).